Consider the following 287-residue polypeptide: Vesicle-associated protein 4-3 (287 aa).

Positions 1–14 (MALTEDKSDSDGRR) are enriched in basic and acidic residues. The disordered stretch occupies residues 1–45 (MALTEDKSDSDGRRWGKFKLPFRNSNSQAPSASSSSSMATSSSSV). Positions 25–45 (SNSQAPSASSSSSMATSSSSV) are enriched in low complexity. Residues 99–221 (RLKLDPSAKL…EEQVMRVVFL (123 aa)) enclose the MSP domain.

The protein belongs to the VAMP-associated protein (VAP) (TC 9.B.17) family.

Its function is as follows. May play a role in vesicle trafficking. The sequence is that of Vesicle-associated protein 4-3 (PVA43) from Arabidopsis thaliana (Mouse-ear cress).